A 210-amino-acid chain; its full sequence is Glutathione S-transferase mdpJ (210 aa).

Residues 2 to 83 (SFGTLYTHNP…YCNDERSSLR (82 aa)) form the GST N-terminal domain. The GST C-terminal domain occupies 77 to 200 (DERSSLRILQ…VAGGVPDLGL (124 aa)).

The protein belongs to the GST superfamily.

It participates in secondary metabolite biosynthesis. In terms of biological role, glutathione S-transferase; part of the gene cluster that mediates the biosynthesis of monodictyphenone, a prenyl xanthone derivative. The pathway begins with the synthesis of atrochrysone thioester by the polyketide synthase (PKS) mdpG. The atrochrysone carboxyl ACP thioesterase mdpF then breaks the thioester bond and releases the atrochrysone carboxylic acid from mdpG. The atrochrysone carboxylic acid is then converted to atrochrysone which is further transformed into emodin anthrone. The next step is performed by the anthrone oxygenase mdpH that catalyzes the oxidation of emodinanthrone to emodin. Emodin is further modified to yield monodictyphenone via several steps involving mdpB, mdpC mdpJ, mdpK and mdpL. These enzymes with xptA, xptB and xptC are also proposed to be involved in the synthesis of shamixanthone from emodin. Especially, direct reduction of emodin by the short chain dehydrogenase mdpC followed by dehydration catalyzed by the scytalone dehydratase-like protein mdpB gives loss of oxygen and formation of chrysophanol intermediate in two simple steps. This chain is Glutathione S-transferase mdpJ, found in Emericella nidulans (strain FGSC A4 / ATCC 38163 / CBS 112.46 / NRRL 194 / M139) (Aspergillus nidulans).